Consider the following 783-residue polypeptide: Na(+)/H(+) exchanger protein 7 (783 aa).

Residues 1-18 (MWIKLLFFFTTLLVSTSG) traverse the membrane as a helical segment. Residues 19 to 108 (LGDDGITALL…WHWDYVKNEL (90 aa)) are Extracellular-facing. A helical membrane pass occupies residues 109–129 (VLTLFFIVIGLFKLVYHHTFV). At 130-132 (TRK) the chain is on the cytoplasmic side. The chain crosses the membrane as a helical span at residues 133–153 (ILPESCCLIFIGIAIGFFFVG). The Extracellular portion of the chain corresponds to 154–159 (DATHAS). A helical transmembrane segment spans residues 160-180 (IKFLEFKSKVFFFYLLPPIIL). Over 181–206 (ESAYSLKDRAFIENIGTILLYAVVGT) the chain is Cytoplasmic. A helical membrane pass occupies residues 207 to 227 (ILNIVLLAAALLILIWVGIMG). The Extracellular portion of the chain corresponds to 228–235 (KYNLSVMD). Residues 236–256 (ILTFASLVAAVDPVAVLAVFQ) traverse the membrane as a helical segment. Topologically, residues 257 to 262 (EVGVNK) are cytoplasmic. The chain crosses the membrane as a helical span at residues 263 to 283 (MLYFMVFGESLFNDAVTIVCY). The Extracellular segment spans residues 284-299 (NLAIEFQTLPDFTWYH). Residues 300–320 (GFLGLLSFLCVSIGGLIIGLI) traverse the membrane as a helical segment. The Cytoplasmic portion of the chain corresponds to 321 to 350 (CGAISSFVTKFTTDVRVVEPVVLFGMAYLA). Residues 351–371 (YLGSEMFHFSGIIALIACGLF) traverse the membrane as a helical segment. Residues 372–390 (QTHYACCNISYKSFTSVMY) lie on the Extracellular side of the membrane. N-linked (GlcNAc...) asparagine glycosylation is present at N379. Positions 391–411 (ITKVCSTLCESLIFIILGVML) form an intramembrane region, helical. Residues 412-424 (VNEREWFWTDWHP) are Extracellular-facing. A helical membrane pass occupies residues 425–445 (VFSAVSVVLCVVVRFGVTFFL). At 446-464 (TYFVNQFTGGVRHISFQEQ) the chain is on the cytoplasmic side. Residues 465 to 485 (FIMSYGGLRGAVSFSLVFMIS) form a helical membrane-spanning segment. The Extracellular segment spans residues 486 to 492 (ANPDVKN). Residues 493–513 (TMLGATYAVILFTNIIQGSTI) form a helical membrane-spanning segment. Residues 514-783 (KLFVKWLNIR…TITESEETSF (270 aa)) are Cytoplasmic-facing. Residues 649–702 (DNEDADQRANELIKDVSSIRQLMHNPFEDCYLDRNLTHEEEKEQARLKMKKTRA) are a coiled coil. The interval 745-783 (RPSTSTRVSVEDEEQGLTMKEMEEEHPLMTITESEETSF) is disordered.

Belongs to the monovalent cation:proton antiporter 1 (CPA1) transporter (TC 2.A.36) family. In terms of assembly, interacts (via C-terminus) with cmd-1. In terms of tissue distribution, detected in the posterior cells of the intestine.

The protein resides in the basolateral cell membrane. Na+/H+ exchanger which mediates the transient acidification of the coelomic space and plays a role in contraction of posterior body muscles during defecation. Probably by regulating the defecation motor program, required for fatty acid uptake by intestinal cells. This is Na(+)/H(+) exchanger protein 7 from Caenorhabditis elegans.